Consider the following 287-residue polypeptide: MKSVLVALATATAVSAHGWVDNITISGQFYQVPLHSLDHENLPYQDPYMGEWAPKRISRKIITNGPVEDVTSIDLQCGGSTIEGQIGSEPAPLHAKAVAGSEVSLRWTHWPDSHMGPVLTYMARCPDSGCDKFLPGDEPIWFKIHHEGRHTFDKTWPDDIWATVSIAQHHITSILSFLTLEQTPFMKFDNEPYRYTIPECLKPGFYLVRHEIIALHSAWAAKGAQFYPSCHQLEVSGSGSVVPSASNAELVGFPGAYDAEDPSILFQVWAPGPYNIPGPAVFECPAQ.

The first 16 residues, 1–16 (MKSVLVALATATAVSA), serve as a signal peptide directing secretion. Residue histidine 17 participates in Cu(2+) binding. A glycan (N-linked (GlcNAc...) asparagine) is linked at asparagine 22. 2 disulfides stabilise this stretch: cysteine 77–cysteine 230 and cysteine 200–cysteine 284. Histidine 114 serves as a coordination point for Cu(2+). Residues histidine 216 and glutamine 225 each coordinate O2. Residue tyrosine 227 coordinates Cu(2+).

Belongs to the polysaccharide monooxygenase AA9 family. The cofactor is Cu(2+).

It localises to the secreted. The enzyme catalyses [(1-&gt;4)-beta-D-glucosyl]n+m + reduced acceptor + O2 = 4-dehydro-beta-D-glucosyl-[(1-&gt;4)-beta-D-glucosyl]n-1 + [(1-&gt;4)-beta-D-glucosyl]m + acceptor + H2O.. In terms of biological role, lytic polysaccharide monooxygenase (LPMO) that depolymerizes crystalline and amorphous polysaccharides via the oxidation of scissile alpha- or beta-(1-4)-glycosidic bonds, yielding C1 or C4 oxidation products. Catalysis by LPMOs requires the reduction of the active-site copper from Cu(II) to Cu(I) by a reducing agent and H(2)O(2) or O(2) as a cosubstrate. This Podospora anserina (strain S / ATCC MYA-4624 / DSM 980 / FGSC 10383) (Pleurage anserina) protein is AA9 family lytic polysaccharide monooxygenase C.